A 420-amino-acid chain; its full sequence is D-tagatose-1,6-bisphosphate aldolase subunit GatZ (420 aa).

The protein belongs to the GatZ/KbaZ family. GatZ subfamily. As to quaternary structure, forms a complex with GatY.

The protein operates within carbohydrate metabolism; D-tagatose 6-phosphate degradation; D-glyceraldehyde 3-phosphate and glycerone phosphate from D-tagatose 6-phosphate: step 2/2. Component of the tagatose-1,6-bisphosphate aldolase GatYZ that is required for full activity and stability of the Y subunit. Could have a chaperone-like function for the proper and stable folding of GatY. When expressed alone, GatZ does not show any aldolase activity. Is involved in the catabolism of galactitol. This chain is D-tagatose-1,6-bisphosphate aldolase subunit GatZ, found in Shigella boydii serotype 18 (strain CDC 3083-94 / BS512).